The sequence spans 80 residues: UPF0291 protein EF_1580 (80 aa).

The tract at residues Thr-60–Lys-80 is disordered. The span at Thr-63–Lys-80 shows a compositional bias: basic and acidic residues.

The protein belongs to the UPF0291 family.

It is found in the cytoplasm. This Enterococcus faecalis (strain ATCC 700802 / V583) protein is UPF0291 protein EF_1580.